Consider the following 594-residue polypeptide: MAGEENFKEELRSQDASRNLNQHEVAGHPHSWSLEMLLRRLRAVHTKQDDKFANLLDAVGEFGTFQQRLVALTFIPSIMSAFFMFADHFVFTAQKPYCNTSWILAVGPHLSKAEQLNLTIPQAPNGSFLTCFMYLPVPWNLDSIIQFGLNDTDTCQDGWIYPDAKKRSLINEFDLVCGMETKKDTAQIMFMAGLPIGSLIFRLITDKMGRYPAILLSLLGLIIFGFGTAFMNSFHLYLFFRFGISQSVVGYAISSISLATEWLVGEHRAHAIILGHCFFAVGAVLLTGIAYSLPHWQLLFLVGGILVIPFISYIWILPESPRWLMMKGKVKEAKQVLCYAASVNKKTIPSNLLDELQLPRKKVTRASVLDFCKNRQLCKVTLVMSCVWFTVSYTYFTLSLRMRELGVSVHFRHVVPSIMEVPARLCCIFLLQQIGRKWSLAVTLLQAIIWCLLLLFLPEGEDGLRLKWPRCPATELKSMTILVLMLREFSLAATVTVFFLYTAELLPTVLRATGLGLVSLASVAGAILSLTIISQTPSLLPIFLCCVLAIVAFSLSSLLPETRDQPLSESLNHSSQIRNKVKDMKTKETSSDDV.

Topologically, residues Met1 to Val70 are cytoplasmic. A helical membrane pass occupies residues Ala71 to Phe91. Over Thr92–Asp184 the chain is Extracellular. Residues Asn99, Asn117, Asn125, and Asn150 are each glycosylated (N-linked (GlcNAc...) asparagine). Residues Thr185–Thr205 traverse the membrane as a helical segment. Residues Asp206–Arg210 lie on the Cytoplasmic side of the membrane. A helical membrane pass occupies residues Tyr211 to Met231. At Asn232 to His235 the chain is on the extracellular side. Residues Leu236–Ile256 form a helical membrane-spanning segment. At Ser257 to His270 the chain is on the cytoplasmic side. A helical transmembrane segment spans residues Ala271–Tyr291. The Extracellular portion of the chain corresponds to Ser292–Gln297. The chain crosses the membrane as a helical span at residues Leu298–Pro318. Residues Glu319–Lys379 lie on the Cytoplasmic side of the membrane. Residues Val380 to Leu400 form a helical membrane-spanning segment. Over Arg401–Ser408 the chain is Extracellular. Residues Val409–Leu431 form a helical membrane-spanning segment. Residues Gln432–Lys437 are Cytoplasmic-facing. Residues Trp438 to Pro458 form a helical membrane-spanning segment. At Glu459 to Glu488 the chain is on the extracellular side. The helical transmembrane segment at Phe489–Val509 threads the bilayer. Residues Leu510–Ala512 lie on the Cytoplasmic side of the membrane. The chain crosses the membrane as a helical span at residues Thr513–Ile533. Over Ser534–Ser538 the chain is Extracellular. Residues Leu539–Leu559 traverse the membrane as a helical segment. The Cytoplasmic portion of the chain corresponds to Pro560 to Val594. The disordered stretch occupies residues Pro566 to Val594. The segment covering Leu567–Arg578 has biased composition (polar residues). Over residues Lys580–Val594 the composition is skewed to basic and acidic residues.

Belongs to the major facilitator (TC 2.A.1) superfamily. Organic cation transporter (TC 2.A.1.19) family. Ubiquitous.

The protein resides in the mitochondrion inner membrane. The protein localises to the cell projection. Its subcellular location is the cilium. It is found in the flagellum membrane. The enzyme catalyses riboflavin(in) = riboflavin(out). Functionally, riboflavin transporter localized at the inner mitochondrial membrane of the spermatozoa midpiece, which is required for male fertility. SLC22A14-mediated riboflavin transport is essential for spermatozoa energy generation and motility: riboflavin is the precursor of FMN and FAD, which are coenzymes of many enzymes in the TCA cycle (the citric acid cycle) in mitochondria. Required for sperm motility and normal sperm flagellar structure. The sequence is that of Solute carrier family 22 member 14 from Homo sapiens (Human).